The following is an 83-amino-acid chain: Conotoxin p21a (83 aa).

4-hydroxyproline; partial is present on residues Pro24 and Pro43. Position 83 is a histidine amide (His83).

In terms of assembly, may form a non-covalent dimer. Post-translationally, contains 5 disulfide bonds. As to expression, expressed by the venom duct.

The protein localises to the secreted. This Conus purpurascens (Purple cone) protein is Conotoxin p21a.